Reading from the N-terminus, the 570-residue chain is Urease subunit alpha (570 aa).

The region spanning 131–570 (GGFDSHIHFI…LPMAQRYFMY (440 aa)) is the Urease domain. Residues histidine 136, histidine 138, and lysine 219 each contribute to the Ni(2+) site. Lysine 219 bears the N6-carboxylysine mark. Histidine 221 contributes to the substrate binding site. Positions 248 and 274 each coordinate Ni(2+). The active-site Proton donor is histidine 322. Residue aspartate 362 participates in Ni(2+) binding.

The protein belongs to the metallo-dependent hydrolases superfamily. Urease alpha subunit family. In terms of assembly, heterotrimer of UreA (gamma), UreB (beta) and UreC (alpha) subunits. Three heterotrimers associate to form the active enzyme. The cofactor is Ni cation. Post-translationally, carboxylation allows a single lysine to coordinate two nickel ions.

Its subcellular location is the cytoplasm. The enzyme catalyses urea + 2 H2O + H(+) = hydrogencarbonate + 2 NH4(+). The protein operates within nitrogen metabolism; urea degradation; CO(2) and NH(3) from urea (urease route): step 1/1. This Rhodopseudomonas palustris (strain BisB18) protein is Urease subunit alpha.